The sequence spans 432 residues: MGNNVVVLGTQWGDEGKGKIVDLLTERAKYVVRYQGGHNAGHTLVINGEKTVLHLIPSGILRENVTSIIGNGVVLSPSALMKEMKELEDRGIPVRERLLLSEACPLILDYHVALDNAREKARGAKAIGTTGRGIGPAYEDKVARRGLRVGDLFDKETFAEKLKEVMEYHNFQLVNYYKVEAVDYQKVLDDTMAVADILTSMVVDVSDLLDQARQRGDFVMFEGAQGTLLDIDHGTYPYVTSSNTTAGGVATGSGLGPRYVDYVLGILKAYSTRVGAGPFPTELFDETGEFLCKQGNEYGATTGRRRRTGWLDTVAVRRAVQLNSLSGFCLTKLDVLDGLKEVKLCVAYRMPDGREVTTTPLAADDWKGVEPIYETMPGWSESTFGVKDRSGLPQAALNYIKRIEELTGVPIDIISTGPDRTETMILRDPFDA.

GTP is bound by residues 13-19 (GDEGKGK) and 41-43 (GHT). The active-site Proton acceptor is D14. Mg(2+)-binding residues include D14 and G41. Residues 14 to 17 (DEGK), 39 to 42 (NAGH), T130, R144, Q225, T240, and R304 contribute to the IMP site. Residue H42 is the Proton donor of the active site. Residue 300 to 306 (ATTGRRR) participates in substrate binding. Residues R306, 332 to 334 (KLD), and 415 to 417 (STG) each bind GTP.

It belongs to the adenylosuccinate synthetase family. As to quaternary structure, homodimer. Mg(2+) serves as cofactor.

The protein localises to the cytoplasm. The catalysed reaction is IMP + L-aspartate + GTP = N(6)-(1,2-dicarboxyethyl)-AMP + GDP + phosphate + 2 H(+). It functions in the pathway purine metabolism; AMP biosynthesis via de novo pathway; AMP from IMP: step 1/2. Its function is as follows. Plays an important role in the de novo pathway of purine nucleotide biosynthesis. Catalyzes the first committed step in the biosynthesis of AMP from IMP. The polypeptide is Adenylosuccinate synthetase (Salmonella paratyphi A (strain AKU_12601)).